Consider the following 400-residue polypeptide: Golgin-45 (400 aa).

The interval 1–36 (MEKMTTLKSFESKGILTSTPIRGAGDGMETEEPPKS) is disordered. Positions 22–26 (RGAGD) match the Tankyrase-binding motif motif. S53 bears the Phosphoserine mark. Residues 126-263 (LSEVKKVLEK…LSEREQFRQE (138 aa)) are a coiled coil. S356 is modified (phosphoserine). Positions 394–400 (QGELLAL) are essential for interaction with GORASP2.

As to quaternary structure, interacts with GORASP2. Interacts with the GTP-bound form of RAB2, but not with other Golgi Rab proteins. Identified in a complex with RAB2 and GORASP2. In terms of processing, ADP-ribosylated by tankyrase TNKS and TNKS2. Poly-ADP-ribosylated protein is recognized by RNF146, followed by ubiquitination. Post-translationally, ubiquitinated by RNF146 when poly-ADP-ribosylated, leading to its degradation.

The protein resides in the golgi apparatus membrane. Its function is as follows. Required for normal Golgi structure and for protein transport from the endoplasmic reticulum (ER) through the Golgi apparatus to the cell surface. The polypeptide is Golgin-45 (Rattus norvegicus (Rat)).